A 427-amino-acid polypeptide reads, in one-letter code: Serine--tRNA ligase (427 aa).

Position 231 to 233 (231 to 233 (TAE)) interacts with L-serine. 262-264 (RSE) provides a ligand contact to ATP. Glu-285 provides a ligand contact to L-serine. An ATP-binding site is contributed by 349 to 352 (EISS). Residue Ser-385 coordinates L-serine.

Belongs to the class-II aminoacyl-tRNA synthetase family. Type-1 seryl-tRNA synthetase subfamily. In terms of assembly, homodimer. The tRNA molecule binds across the dimer.

The protein resides in the cytoplasm. The enzyme catalyses tRNA(Ser) + L-serine + ATP = L-seryl-tRNA(Ser) + AMP + diphosphate + H(+). The catalysed reaction is tRNA(Sec) + L-serine + ATP = L-seryl-tRNA(Sec) + AMP + diphosphate + H(+). Its pathway is aminoacyl-tRNA biosynthesis; selenocysteinyl-tRNA(Sec) biosynthesis; L-seryl-tRNA(Sec) from L-serine and tRNA(Sec): step 1/1. In terms of biological role, catalyzes the attachment of serine to tRNA(Ser). Is also able to aminoacylate tRNA(Sec) with serine, to form the misacylated tRNA L-seryl-tRNA(Sec), which will be further converted into selenocysteinyl-tRNA(Sec). The protein is Serine--tRNA ligase of Sinorhizobium fredii (strain NBRC 101917 / NGR234).